Reading from the N-terminus, the 99-residue chain is MRIGVVGDPDVVAGFRLAGLTDVYEVNSPEQAAKAIEELNSNSEIGLIITTERIGEKIRDAISSIKKVVVEVPDKNGPIVRENDPVKVLVRNAVGVDIK.

It belongs to the V-ATPase F subunit family. In terms of assembly, has multiple subunits with at least A(3), B(3), C, D, E, F, H, I and proteolipid K(x).

Its subcellular location is the cell membrane. Functionally, component of the A-type ATP synthase that produces ATP from ADP in the presence of a proton gradient across the membrane. The chain is A-type ATP synthase subunit F from Methanococcus maripaludis (strain DSM 14266 / JCM 13030 / NBRC 101832 / S2 / LL).